Reading from the N-terminus, the 874-residue chain is Ectonucleotide pyrophosphatase/phosphodiesterase family member 3 (874 aa).

At 1-11 the chain is on the cytoplasmic side; that stretch reads MQSTLNLSTEE. Residues 12–30 form a helical; Signal-anchor for type II membrane protein membrane-spanning segment; the sequence is PVKRNTVKKYKIICIVLLI. Residues 31 to 874 lie on the Extracellular side of the membrane; that stretch reads LLVAVSLALG…TYLPVFETVI (844 aa). 2 SMB domains span residues 50-93 and 94-138; these read EQGS…VQST and QIWT…GETS. Cystine bridges form between Cys54/Cys71, Cys58/Cys89, Cys69/Cys82, Cys75/Cys81, Cys98/Cys115, Cys103/Cys133, Cys113/Cys126, Cys119/Cys125, Cys144/Cys190, and Cys152/Cys364. The short motif at 78–80 is the Cell attachment site element; sequence RGD. The phosphodiesterase stretch occupies residues 160-544; it reads PVILFSMDGF…HGSLNHLLKV (385 aa). Zn(2+) is bound at residue Asp167. Lys204 contributes to the ATP binding site. Zn(2+) is bound at residue Thr205. The Nucleophile role is filled by Thr205. An ATP-binding site is contributed by Asn226. N-linked (GlcNAc...) asparagine glycosylation is present at Asn236. Asp275 is a binding site for ATP. A glycan (N-linked (GlcNAc...) asparagine) is linked at Asn279. Residue Tyr289 participates in ATP binding. An N-linked (GlcNAc...) asparagine glycan is attached at Asn290. Zn(2+) is bound by residues Asp325, His329, Asp372, and His373. Cystine bridges form between Cys380/Cys477, Cys428/Cys817, Cys561/Cys622, Cys574/Cys678, Cys576/Cys663, and Cys786/Cys796. A glycan (N-linked (GlcNAc...) asparagine) is linked at Asn425. His482 is a binding site for Zn(2+). Asn532 carries an N-linked (GlcNAc...) asparagine glycan. The nuclease stretch occupies residues 581 to 874; sequence TNSDLERVNQ…TYLPVFETVI (294 aa). N-linked (GlcNAc...) asparagine glycans are attached at residues Asn677, Asn686, and Asn698. Positions 751, 755, 757, and 759 each coordinate Ca(2+). Asn770, Asn788, and Asn820 each carry an N-linked (GlcNAc...) asparagine glycan.

It belongs to the nucleotide pyrophosphatase/phosphodiesterase family. In terms of assembly, monomer and homodimer. The cofactor is Zn(2+). N-glycosylated. N-glycosylation is necessary for normal transport to the cell membrane, but is not the apical targeting signal.

It localises to the cell membrane. Its subcellular location is the apical cell membrane. The protein localises to the secreted. It carries out the reaction a ribonucleoside 5'-triphosphate + H2O = a ribonucleoside 5'-phosphate + diphosphate + H(+). It catalyses the reaction ATP + H2O = AMP + diphosphate + H(+). The catalysed reaction is CTP + H2O = CMP + diphosphate + H(+). The enzyme catalyses GTP + H2O = GMP + diphosphate + H(+). It carries out the reaction UTP + H2O = UMP + diphosphate + H(+). It catalyses the reaction UDP-N-acetyl-alpha-D-glucosamine + H2O = N-acetyl-alpha-D-glucosamine 1-phosphate + UMP + 2 H(+). The catalysed reaction is P(1),P(3)-bis(5'-adenosyl) triphosphate + H2O = AMP + ADP + 2 H(+). The enzyme catalyses P(1),P(4)-bis(5'-adenosyl) tetraphosphate + H2O = AMP + ATP + 2 H(+). It carries out the reaction P(1),P(5)-bis(5'-adenosyl) pentaphosphate + H2O = adenosine 5'-tetraphosphate + AMP + 2 H(+). It catalyses the reaction P(1),P(4)-bis(5'-guanosyl) tetraphosphate + H2O = GMP + GTP + 2 H(+). The catalysed reaction is Hydrolytically removes 5'-nucleotides successively from the 3'-hydroxy termini of 3'-hydroxy-terminated oligonucleotides.. Its function is as follows. Hydrolase that metabolizes extracellular nucleotides, including ATP, GTP, UTP and CTP. Limits mast cells and basophils response during inflammation and during the chronic phases of allergic responses by eliminating extracellular ATP, a signaling molecule activating these cells in an autocrine manner. Metabolizes extracellular ATP in the lumen of the small intestine, and thereby prevents ATP-induced apoptosis of intestinal plasmacytoid dendritic cells. Has a broad specificity and can also hydrolyze UDP-GlcNAc into UMP and GlcNAc-1-phosphate and potentially several other intracellular nucleotide sugars, including UDP-GalNAc, CMP-NeuAc, GDP-Fuc, and UDP-GlcA. Thereby, could modulate glycan biosynthesis and protein glycosylation. Can hydrolyze extracellular dinucleoside polyphosphates, including the vasoactive adenosine polyphosphates as well. In addition, displays an alkaline phosphodiesterase activity in vitro. This is Ectonucleotide pyrophosphatase/phosphodiesterase family member 3 (ENPP3) from Bos taurus (Bovine).